The chain runs to 502 residues: Glycerol kinase (502 aa).

An ADP-binding site is contributed by T15. The ATP site is built by T15, T16, and S17. T15 provides a ligand contact to sn-glycerol 3-phosphate. R19 serves as a coordination point for ADP. Sn-glycerol 3-phosphate contacts are provided by R85, E86, and Y137. Residues R85, E86, and Y137 each contribute to the glycerol site. A Phosphohistidine; by HPr modification is found at H233. Residue D247 coordinates sn-glycerol 3-phosphate. 2 residues coordinate glycerol: D247 and Q248. ADP-binding residues include T269 and G312. Residues T269, G312, Q316, and G413 each coordinate ATP. ADP-binding residues include G413 and N417.

The protein belongs to the FGGY kinase family. As to quaternary structure, homotetramer and homodimer (in equilibrium). Post-translationally, the phosphoenolpyruvate-dependent sugar phosphotransferase system (PTS), including enzyme I, and histidine-containing protein (HPr) are required for the phosphorylation, which leads to the activation of the enzyme.

It carries out the reaction glycerol + ATP = sn-glycerol 3-phosphate + ADP + H(+). The protein operates within polyol metabolism; glycerol degradation via glycerol kinase pathway; sn-glycerol 3-phosphate from glycerol: step 1/1. Activated by phosphorylation and inhibited by fructose 1,6-bisphosphate (FBP). In terms of biological role, key enzyme in the regulation of glycerol uptake and metabolism. Catalyzes the phosphorylation of glycerol to yield sn-glycerol 3-phosphate. In Streptococcus agalactiae serotype Ia (strain ATCC 27591 / A909 / CDC SS700), this protein is Glycerol kinase.